The primary structure comprises 121 residues: Fluoride-specific ion channel FluC 1 (121 aa).

The next 4 helical transmembrane spans lie at 3–23 (YVYI…ISFL), 35–55 (VANL…IAFF), 64–84 (AITT…LELI), and 92–112 (FITL…LCYV). Gly-71 and Thr-74 together coordinate Na(+).

Belongs to the fluoride channel Fluc/FEX (TC 1.A.43) family.

The protein localises to the cell membrane. It carries out the reaction fluoride(in) = fluoride(out). Na(+) is not transported, but it plays an essential structural role and its presence is essential for fluoride channel function. Its function is as follows. Fluoride-specific ion channel. Important for reducing fluoride concentration in the cell, thus reducing its toxicity. In Staphylococcus aureus (strain bovine RF122 / ET3-1), this protein is Fluoride-specific ion channel FluC 1.